A 284-amino-acid chain; its full sequence is Prestalk D11 protein (284 aa).

A signal peptide spans 1-25 (MLNKLILLLILSSCLVLSVKSEVNV). The stretch at 25-64 (VDCSLVRCAQPICKPHYRLNMTDSCCGRCEPCTDVACTLQ) is one A-1 repeat. Residues 65–82 (VKYCQDGEVPTGCCPCTL) form a B-1 repeat. The stretch at 88-126 (DCSLVKCARPVCKPYYRLNMTDSCCGRCEPCTGVACTLQ) is one A-2 repeat. Residues 127–144 (IKYCKDGEVPTGCCPCTP) form a B-2 repeat. The stretch at 145 to 159 (QPTKKPDCSKVPCPK) is one C-1 repeat. The stretch at 161–178 (LKYCQEGELPTGCCPCTP) is one B-3 repeat. The stretch at 179–193 (QPTKKPDCSRVPCPK) is one C-2 repeat. Residues 195-212 (LKYCKEGELPTGCCPCTP) form a B-4 repeat. One copy of the C-3 repeat lies at 213 to 228 (QPTKKPDCSDVMCTMD). The B-5 repeat unit spans residues 229–246 (IRYCKNGELPTGCCPCTP). The C-4 repeat unit spans residues 247-262 (QETKVPDCSKAMCTMD). A B-6 repeat occupies 263 to 278 (IKYCKPGEKPFGCCPC).

The protein is Prestalk D11 protein (ampA) of Dictyostelium discoideum (Social amoeba).